Here is a 103-residue protein sequence, read N- to C-terminus: Co-chaperonin GroES (103 aa).

Belongs to the GroES chaperonin family. Heptamer of 7 subunits arranged in a ring. Interacts with the chaperonin GroEL.

It localises to the cytoplasm. In terms of biological role, together with the chaperonin GroEL, plays an essential role in assisting protein folding. The GroEL-GroES system forms a nano-cage that allows encapsulation of the non-native substrate proteins and provides a physical environment optimized to promote and accelerate protein folding. GroES binds to the apical surface of the GroEL ring, thereby capping the opening of the GroEL channel. This Synechococcus elongatus (strain ATCC 33912 / PCC 7942 / FACHB-805) (Anacystis nidulans R2) protein is Co-chaperonin GroES.